Consider the following 169-residue polypeptide: Small proline-rich protein 3 (169 aa).

Low complexity predominate over residues methionine 1–proline 24. Positions methionine 1–glycine 57 are disordered. An N-acetylserine modification is found at serine 2. Tandem repeats lie at residues serine 43–asparagine 50, threonine 51–cysteine 58, threonine 59–cysteine 66, threonine 67–cysteine 74, threonine 75–cysteine 82, threonine 83–cysteine 90, threonine 91–cysteine 98, threonine 99–tyrosine 106, threonine 107–serine 114, isoleucine 115–phenylalanine 122, isoleucine 123–alanine 130, isoleucine 131–tyrosine 138, threonine 139–tyrosine 146, and threonine 147–proline 154. Positions serine 43–proline 154 are 14 X 8 AA approximate tandem repeats. Positions proline 150–lysine 169 are disordered. Positions serine 155–lysine 169 are enriched in polar residues.

It localises to the cytoplasm. Its function is as follows. Cross-linked envelope protein of keratinocytes. The sequence is that of Small proline-rich protein 3 (SPRR3) from Homo sapiens (Human).